The following is a 2109-amino-acid chain: General transcription factor 3C polypeptide 1 (2109 aa).

Residues 467-521 (LPEGEDTFLSESDSEEERSSSKRRGRGSQKDTRASANLRPKTQPHHSTPTKGGWK) are disordered. Residues 469-482 (EGEDTFLSESDSEE) are compositionally biased toward acidic residues. K529 is covalently cross-linked (Glycyl lysine isopeptide (Lys-Gly) (interchain with G-Cter in SUMO2)). The tract at residues 586–609 (MENPKESSSSLKTGRHSSGQDKPH) is disordered. Residue S667 is modified to Phosphoserine. Positions 718 to 727 (STANRVKTSQ) are enriched in polar residues. The segment at 718–775 (STANRVKTSQPPVPQGEAEEDSQGKEGPSGSGDSQLSASSRSESGRMKKSDNKMGITP) is disordered. S739 bears the Phosphoserine mark. Residues 748–759 (SGDSQLSASSRS) are compositionally biased toward low complexity. A compositionally biased stretch (basic and acidic residues) spans 760-769 (ESGRMKKSDN). Glycyl lysine isopeptide (Lys-Gly) (interchain with G-Cter in SUMO2) cross-links involve residues K770 and K833. Disordered regions lie at residues 836–857 (SGRA…SEAP) and 1059–1082 (RKNS…ESAM). Residues S1062 and S1068 each carry the phosphoserine modification. The span at 1073–1082 (SLQKEQESAM) shows a compositional bias: basic and acidic residues. Residue K1142 forms a Glycyl lysine isopeptide (Lys-Gly) (interchain with G-Cter in SUMO2) linkage. Residues 1202 to 1241 (SLDRNRRVRGGKSQKRKRLKKDPGKKIKRKKKGEFPGEKS) are disordered. Basic residues predominate over residues 1207-1221 (RRVRGGKSQKRKRLK). Phosphoserine occurs at positions 1253 and 1611. The segment at 1608–1631 (KDGSLEDDEDEEDDLDEGVGGKRR) is disordered. Positions 1612-1624 (LEDDEDEEDDLDE) are enriched in acidic residues. Phosphoserine is present on residues S1632 and S1653. The span at 1823-1833 (EDADIQREDPQ) shows a compositional bias: basic and acidic residues. A disordered region spans residues 1823–1961 (EDADIQREDP…GSEDPRGFTE (139 aa)). Positions 1838–1848 (EGSSSEDSPPE) are enriched in low complexity. Phosphoserine is present on residues S1856, S1865, S1868, S1896, and S1911. Residues 1916-1926 (LEDTAAAGAAQ) show a composition bias toward low complexity. The span at 1937-1947 (SPGQEQLSGQA) shows a compositional bias: polar residues. At S1969 the chain carries Phosphoserine.

This sequence belongs to the TFIIIC subunit 1 family. In terms of assembly, part of the TFIIIC subcomplex TFIIIC2, consisting of six subunits, GTF3C1, GTF3C2, GTF3C3, GTF3C4, GTF3C5 and GTF3C6. Interacts with IGHMBP2. Interacts with MAF1.

It localises to the nucleus. Its function is as follows. Required for RNA polymerase III-mediated transcription. Component of TFIIIC that initiates transcription complex assembly on tRNA and is required for transcription of 5S rRNA and other stable nuclear and cytoplasmic RNAs. Binds to the box B promoter element. This chain is General transcription factor 3C polypeptide 1 (GTF3C1), found in Homo sapiens (Human).